Consider the following 140-residue polypeptide: UPF0225 protein SAV_6631 (140 aa).

Positions 1 to 22 are disordered; it reads MSKSRRTRSTSRPTSRPQPASC. The segment covering 10 to 19 has biased composition (low complexity); sequence TSRPTSRPQP.

It belongs to the UPF0225 family.

The chain is UPF0225 protein SAV_6631 from Streptomyces avermitilis (strain ATCC 31267 / DSM 46492 / JCM 5070 / NBRC 14893 / NCIMB 12804 / NRRL 8165 / MA-4680).